The primary structure comprises 384 residues: Dual-specificity RNA methyltransferase RlmN (384 aa).

Residue Glu93 is the Proton acceptor of the active site. The Radical SAM core domain occupies 99–339 (EETRGTLCVS…TTIRKTRGDD (241 aa)). The cysteines at positions 106 and 344 are disulfide-linked. Positions 113, 117, and 120 each coordinate [4Fe-4S] cluster. S-adenosyl-L-methionine is bound by residues 170-171 (GE), Ser202, 224-226 (SLH), and Asn301. The S-methylcysteine intermediate role is filled by Cys344.

It belongs to the radical SAM superfamily. RlmN family. Requires [4Fe-4S] cluster as cofactor.

The protein localises to the cytoplasm. It carries out the reaction adenosine(2503) in 23S rRNA + 2 reduced [2Fe-2S]-[ferredoxin] + 2 S-adenosyl-L-methionine = 2-methyladenosine(2503) in 23S rRNA + 5'-deoxyadenosine + L-methionine + 2 oxidized [2Fe-2S]-[ferredoxin] + S-adenosyl-L-homocysteine. It catalyses the reaction adenosine(37) in tRNA + 2 reduced [2Fe-2S]-[ferredoxin] + 2 S-adenosyl-L-methionine = 2-methyladenosine(37) in tRNA + 5'-deoxyadenosine + L-methionine + 2 oxidized [2Fe-2S]-[ferredoxin] + S-adenosyl-L-homocysteine. Specifically methylates position 2 of adenine 2503 in 23S rRNA and position 2 of adenine 37 in tRNAs. m2A2503 modification seems to play a crucial role in the proofreading step occurring at the peptidyl transferase center and thus would serve to optimize ribosomal fidelity. This is Dual-specificity RNA methyltransferase RlmN from Cupriavidus pinatubonensis (strain JMP 134 / LMG 1197) (Cupriavidus necator (strain JMP 134)).